Consider the following 317-residue polypeptide: Methionyl-tRNA formyltransferase (317 aa).

109 to 112 (SLLP) is a binding site for (6S)-5,6,7,8-tetrahydrofolate.

It belongs to the Fmt family.

It catalyses the reaction L-methionyl-tRNA(fMet) + (6R)-10-formyltetrahydrofolate = N-formyl-L-methionyl-tRNA(fMet) + (6S)-5,6,7,8-tetrahydrofolate + H(+). Attaches a formyl group to the free amino group of methionyl-tRNA(fMet). The formyl group appears to play a dual role in the initiator identity of N-formylmethionyl-tRNA by promoting its recognition by IF2 and preventing the misappropriation of this tRNA by the elongation apparatus. In Halalkalibacterium halodurans (strain ATCC BAA-125 / DSM 18197 / FERM 7344 / JCM 9153 / C-125) (Bacillus halodurans), this protein is Methionyl-tRNA formyltransferase.